Reading from the N-terminus, the 153-residue chain is Methylglyoxal synthase (153 aa).

The MGS-like domain occupies 6 to 153 (RTIAARKHIA…QRYLAERLPS (148 aa)). Residues His-19, Lys-23, 45–48 (TGTT), and 65–66 (SG) contribute to the substrate site. Catalysis depends on Asp-71, which acts as the Proton donor/acceptor. His-98 lines the substrate pocket.

Belongs to the methylglyoxal synthase family.

It catalyses the reaction dihydroxyacetone phosphate = methylglyoxal + phosphate. Its function is as follows. Catalyzes the formation of methylglyoxal from dihydroxyacetone phosphate. The sequence is that of Methylglyoxal synthase from Sodalis glossinidius (strain morsitans).